We begin with the raw amino-acid sequence, 263 residues long: Superoxide dismutase [Fe] 3, chloroplastic (263 aa).

The transit peptide at 1-41 (MSSCVVTTSCFYTISDSSIRLKSPKLLNLSNQQRRRSLRSR) directs the protein to the chloroplast. Fe cation contacts are provided by His74, His127, Asp211, and His215.

This sequence belongs to the iron/manganese superoxide dismutase family. As to quaternary structure, homodimer. Heterodimer with FSD2. Interacts with MRL7. Fe cation serves as cofactor.

It is found in the plastid. The protein resides in the chloroplast thylakoid. The enzyme catalyses 2 superoxide + 2 H(+) = H2O2 + O2. Activated by cpn20/cpn21 (in vitro). Destroys superoxide anion radicals which are normally produced within the cells and which are toxic to biological systems. Plays important role in chloroplast development, particularly in the maintenance of thylakoids membranes. Seems to act as a heterodimer with FSD2. The chain is Superoxide dismutase [Fe] 3, chloroplastic from Arabidopsis thaliana (Mouse-ear cress).